The chain runs to 504 residues: Plasma protease C1 inhibitor (504 aa).

An N-terminal signal peptide occupies residues 1 to 22 (MASRLTPLTLLLLLLAGDRAFS). The disordered stretch occupies residues 22–67 (SDPEATSHSTQDPLEAQAKSRESFPERDDSWSPPEPTVLPSTWPTT). Residues 39–51 (AKSRESFPERDDS) show a composition bias toward basic and acidic residues. Residues Asn-75, Asn-83, and Asn-107 are each glycosylated (N-linked (GlcNAc...) asparagine). Over residues 85–124 (SFSQHSQPAAQLPTDSPGQPPLNSSSQPSTASDLPTQATT) the composition is skewed to polar residues. A disordered region spans residues 85-141 (SFSQHSQPAAQLPTDSPGQPPLNSSSQPSTASDLPTQATTEPFCPEPLAQCSDSDRD). Cystine bridges form between Cys-128/Cys-432 and Cys-135/Cys-210. 2 N-linked (GlcNAc...) asparagine glycosylation sites follow: Asn-243 and Asn-356.

It belongs to the serpin family. Interacts with MASP1.

It is found in the secreted. Serine protease inhibitor, which acrs as a regulator of the classical complement pathway. Forms a proteolytically inactive stoichiometric complex with the C1r or C1s proteases. May also regulate blood coagulation, fibrinolysis and the generation of kinins. Very efficient inhibitor of FXIIa. Inhibits chymotrypsin and kallikrein. The polypeptide is Plasma protease C1 inhibitor (Serping1) (Mus musculus (Mouse)).